The following is a 589-amino-acid chain: Sulfite reductase [NADPH] hemoprotein beta-component (589 aa).

[4Fe-4S] cluster is bound by residues Cys-443, Cys-449, Cys-488, and Cys-492. Cys-492 contacts siroheme.

It belongs to the nitrite and sulfite reductase 4Fe-4S domain family. Alpha(8)-beta(8). The alpha component is a flavoprotein, the beta component is a hemoprotein. Siroheme is required as a cofactor. Requires [4Fe-4S] cluster as cofactor.

It catalyses the reaction hydrogen sulfide + 3 NADP(+) + 3 H2O = sulfite + 3 NADPH + 4 H(+). It functions in the pathway sulfur metabolism; hydrogen sulfide biosynthesis; hydrogen sulfide from sulfite (NADPH route): step 1/1. Component of the sulfite reductase complex that catalyzes the 6-electron reduction of sulfite to sulfide. This is one of several activities required for the biosynthesis of L-cysteine from sulfate. This is Sulfite reductase [NADPH] hemoprotein beta-component from Neisseria meningitidis serogroup C / serotype 2a (strain ATCC 700532 / DSM 15464 / FAM18).